Reading from the N-terminus, the 359-residue chain is Putative nucleotidyltransferase MAB21L1 (359 aa).

A ribonucleoside 5'-triphosphate-binding positions include 23–24 and 63–66; these read RK and YEGL. The Mg(2+) site is built by E73 and E75. Residues K248 and 252-255 contribute to the a ribonucleoside 5'-triphosphate site; that span reads SLLK.

The protein belongs to the mab-21 family. In terms of assembly, monomer. Homodecamer; composed of 2 back to back homopentamers. The protein may exist as monomer in solution and oiligomerizes upon ligand binding.

It is found in the nucleus. Functionally, putative nucleotidyltransferase required for several aspects of embryonic development including normal development of the eye. It is unclear whether it displays nucleotidyltransferase activity in vivo. Binds single-stranded RNA (ssRNA). The polypeptide is Putative nucleotidyltransferase MAB21L1 (mab21l1) (Xenopus tropicalis (Western clawed frog)).